Here is a 258-residue protein sequence, read N- to C-terminus: UPF0246 protein NTHI1156 (258 aa).

It belongs to the UPF0246 family.

This is UPF0246 protein NTHI1156 from Haemophilus influenzae (strain 86-028NP).